The following is a 254-amino-acid chain: Trypsin 3A1 (254 aa).

The first 20 residues, 1–20 (MNQFLFVSFCALLGLSQVSA), serve as a signal peptide directing secretion. Positions 21 to 27 (ATLSSGR) are cleaved as a propeptide — activation peptide. A Peptidase S1 domain is found at 28-253 (IVGGFQIDIA…VRQWIREVSE (226 aa)). Cysteines 53 and 69 form a disulfide. Residues His-68 and Asp-113 each act as charge relay system in the active site. 2 disulfides stabilise this stretch: Cys-178-Cys-194 and Cys-205-Cys-229. Ser-209 (charge relay system) is an active-site residue.

This sequence belongs to the peptidase S1 family. As to expression, midgut.

Its subcellular location is the secreted. The protein resides in the extracellular space. The catalysed reaction is Preferential cleavage: Arg-|-Xaa, Lys-|-Xaa.. In terms of biological role, major function may be to aid in digestion of the blood meal. This chain is Trypsin 3A1, found in Aedes aegypti (Yellowfever mosquito).